The primary structure comprises 323 residues: Aldo-keto reductase family 1 member C1 (323 aa).

NADP(+) is bound by residues G20–Y24 and D50. Residue Y24 participates in substrate binding. Residue Y55 is the Proton donor of the active site. A substrate-binding site is contributed by H117. NADP(+) is bound by residues S166 to N167, Q190, and Y216 to H222. Positions 222 and 227 each coordinate substrate. Residue K270–N280 coordinates NADP(+).

This sequence belongs to the aldo/keto reductase family. Monomer. In terms of tissue distribution, expressed in liver, adrenal gland, intestine and kidney.

The protein resides in the cytoplasm. The protein localises to the cytosol. The catalysed reaction is a 3alpha-hydroxysteroid + NADP(+) = a 3-oxosteroid + NADPH + H(+). It catalyses the reaction a 3alpha-hydroxysteroid + NAD(+) = a 3-oxosteroid + NADH + H(+). The enzyme catalyses (17R,20S)-17,20-dihydroxypregn-4-en-3-one + NADP(+) = 17alpha-hydroxyprogesterone + NADPH + H(+). It carries out the reaction (17R,20S)-17,20-dihydroxypregn-4-en-3-one + NAD(+) = 17alpha-hydroxyprogesterone + NADH + H(+). The catalysed reaction is (20S)-hydroxypregn-4-en-3-one + NADP(+) = progesterone + NADPH + H(+). It catalyses the reaction (20S)-hydroxypregn-4-en-3-one + NAD(+) = progesterone + NADH + H(+). The enzyme catalyses (1R,2R)-1,2-dihydrobenzene-1,2-diol + NADP(+) = catechol + NADPH + H(+). It carries out the reaction (S)-indan-1-ol + NAD(+) = indan-1-one + NADH + H(+). The catalysed reaction is (S)-indan-1-ol + NADP(+) = indan-1-one + NADPH + H(+). It catalyses the reaction 5alpha-androstane-3alpha,17beta-diol + NADP(+) = 17beta-hydroxy-5alpha-androstan-3-one + NADPH + H(+). The enzyme catalyses 5alpha-androstane-3beta,17beta-diol + NADP(+) = 17beta-hydroxy-5alpha-androstan-3-one + NADPH + H(+). It carries out the reaction 5alpha-androstane-3alpha,17beta-diol + NAD(+) = 17beta-hydroxy-5alpha-androstan-3-one + NADH + H(+). The catalysed reaction is 17beta-hydroxy-5alpha-androstan-3-one + NADP(+) = 5alpha-androstan-3,17-dione + NADPH + H(+). It catalyses the reaction androsterone + NADP(+) = 5alpha-androstan-3,17-dione + NADPH + H(+). The enzyme catalyses androsterone + NADPH + H(+) = 5alpha-androstane-3alpha,17beta-diol + NADP(+). It carries out the reaction 5alpha-androstane-3alpha,17beta-diol + NAD(+) = androsterone + NADH + H(+). The catalysed reaction is 17beta-estradiol + NADP(+) = estrone + NADPH + H(+). It catalyses the reaction 17beta-estradiol + NAD(+) = estrone + NADH + H(+). The enzyme catalyses testosterone + NADP(+) = androst-4-ene-3,17-dione + NADPH + H(+). It carries out the reaction 20alpha-hydroxy-5beta-pregnan-3-one + NADP(+) = 5beta-pregnan-3,20-dione + NADPH + H(+). The catalysed reaction is 3beta-hydroxy-5beta-pregnane-20-one + NADP(+) = 5beta-pregnan-3,20-dione + NADPH + H(+). It catalyses the reaction 3beta-hydroxy-5beta-pregnane-20-one + NADPH + H(+) = 3beta,20alpha-dihydroxy-5beta-pregnane + NADP(+). The enzyme catalyses (3beta,5alpha,17beta)-3-hydroxyandrostan-17-yl sulfate + NADP(+) = 5alpha-dihydrotestosterone sulfate + NADPH + H(+). The protein operates within steroid metabolism. In terms of biological role, cytosolic aldo-keto reductase that catalyzes the NADH and NADPH-dependent reduction of ketosteroids to hydroxysteroids. Most probably acts as a reductase in vivo since the oxidase activity measured in vitro is inhibited by physiological concentrations of NADPH. Displays a broad positional specificity acting on positions 3, 17 and 20 of steroids and regulates the metabolism of hormones like estrogens and androgens. May also reduce conjugated steroids such as 5alpha-dihydrotestosterone sulfate. Displays affinity for bile acids. The protein is Aldo-keto reductase family 1 member C1 (AKR1C1) of Macaca fuscata fuscata (Japanese macaque).